We begin with the raw amino-acid sequence, 248 residues long: UDP-2,3-diacylglucosamine hydrolase (248 aa).

Mn(2+)-binding residues include D7, H9, D40, N78, and H113. Residue 78 to 79 (NR) participates in substrate binding. Substrate contacts are provided by D121, S159, T163, K166, and H194. The Mn(2+) site is built by H194 and H196.

Belongs to the LpxH family. It depends on Mn(2+) as a cofactor.

It localises to the cell inner membrane. It carries out the reaction UDP-2-N,3-O-bis[(3R)-3-hydroxytetradecanoyl]-alpha-D-glucosamine + H2O = 2-N,3-O-bis[(3R)-3-hydroxytetradecanoyl]-alpha-D-glucosaminyl 1-phosphate + UMP + 2 H(+). Its pathway is glycolipid biosynthesis; lipid IV(A) biosynthesis; lipid IV(A) from (3R)-3-hydroxytetradecanoyl-[acyl-carrier-protein] and UDP-N-acetyl-alpha-D-glucosamine: step 4/6. Hydrolyzes the pyrophosphate bond of UDP-2,3-diacylglucosamine to yield 2,3-diacylglucosamine 1-phosphate (lipid X) and UMP by catalyzing the attack of water at the alpha-P atom. Involved in the biosynthesis of lipid A, a phosphorylated glycolipid that anchors the lipopolysaccharide to the outer membrane of the cell. The chain is UDP-2,3-diacylglucosamine hydrolase from Pseudomonas syringae pv. syringae (strain B728a).